Reading from the N-terminus, the 304-residue chain is MSTSHCRFYENKYPEIDDIVMVNVQQIAEMGAYVKLLEYDNIEGMILLSELSRRRIRSIQKLIRVGKNDVAVVLRVDKEKGYIDLSKRRVSSEDIIKCEEKYQKSKTVHSILRYCAEKFQIPLEELYKTIAWPLSRKFGHAYEAFKLSIIDETVWEGIEPPSKDVLDELKNYISKRLTPQAVKIRADVEVSCFSYEGIDAIKDALKSAEDMSTEQMQVKVKLVAAPLYVLTTQALDKQKGIEQLESAIEKITEVITKYGGVCNITMPPKAVTATEDAELQALLESKELDNRSDSEDDEDESDDE.

The region spanning 17-88 (DDIVMVNVQQ…EKGYIDLSKR (72 aa)) is the S1 motif domain. Phosphoserine; by GCN2 is present on serine 52. The interval 283 to 304 (LESKELDNRSDSEDDEDESDDE) is disordered. Residues 284–293 (ESKELDNRSD) are compositionally biased toward basic and acidic residues. Phosphoserine occurs at positions 292 and 294. A compositionally biased stretch (acidic residues) spans 294–304 (SEDDEDESDDE).

This sequence belongs to the eIF-2-alpha family. As to quaternary structure, eukaryotic translation initiation factor 2 eIF2 is a heterotrimeric complex composed of an alpha, a beta and a gamma subunit. The factors eIF-1, eIF-2, eIF-3, TIF5/eIF-5 and methionyl-tRNAi form a multifactor complex (MFC) that may bind to the 40S ribosome. Interacts with CDC123; the interaction is direct. Interacts with GCD1. Post-translationally, phosphorylated; phosphorylation on Ser-52 by the GCN2 protein kinase occurs in response to low amino acid, carbon, or purine availability. Phosphorylation inhibits the guanine nucleotide exchange factor activity of the eIF2B complex.

Its subcellular location is the cytoplasm. It is found in the cytosol. Its function is as follows. eIF-2 functions in the early steps of protein synthesis by forming a ternary complex with GTP and initiator tRNA. This complex binds to a 40S ribosomal subunit, followed by mRNA binding to form a 43S pre-initiation complex. Junction of the 60S ribosomal subunit to form the 80S initiation complex is preceded by hydrolysis of the GTP bound to eIF-2 and release of an eIF-2-GDP binary complex. In order for eIF-2 to recycle and catalyze another round of initiation, the GDP bound to eIF-2 must exchange with GTP by way of a reaction catalyzed by eIF2B. The chain is Eukaryotic translation initiation factor 2 subunit alpha from Saccharomyces cerevisiae (strain ATCC 204508 / S288c) (Baker's yeast).